The following is a 473-amino-acid chain: MSSTDAEAKNEEAVDWEGPDDPENPRNWNQGAKMTHVLLVSSFTLYSNLAAVMFAPGAQDLVAEFGITSTIVASLTVSIYILGYVFGPFLLASMSEIYGRLIIYHICNAVYIAFTIGCALSTDTAMFLVFRFICGCAASAPMAIGGGTIADLHKPEERGKAMALFGLGPLLGPVIGPVVGGFVTQFLGWRWTFWLVLILAGVVSLLALVLMRETFEPVLLTRKAAELRKSTGNYRLQARTYNKDLTPAQLLARATIRPTKMLLMSPIVFLLSVYCAFMFGLTYLLFTTFPAVFEETYGFAADVSGLAYLGLGVGMIISIGLFAVLSDKLLHQPHGGTIARPELRLILMIWSSPLVPIGFFWYGWSAKYEVHWIVPILGTSVIGLGAFLILMPAQLYLVDAFGTEAAASALAANTVLRSLFGAVLPLAGPSLYDSLGLGWGNSLLAFIGLAFAPVPFFFYKYGERLRVRFPVNS.

Positions 1 to 12 (MSSTDAEAKNEE) are enriched in basic and acidic residues. The disordered stretch occupies residues 1–27 (MSSTDAEAKNEEAVDWEGPDDPENPRN). The span at 13 to 22 (AVDWEGPDDP) shows a compositional bias: acidic residues. 11 helical membrane passes run 37-57 (VLLV…FAPG), 71-91 (IVAS…PFLL), 101-121 (LIIY…CALS), 125-145 (AMFL…MAIG), 163-183 (ALFG…GGFV), 191-211 (WTFW…LVLM), 266-286 (PIVF…YLLF), 305-325 (GLAY…FAVL), 345-365 (LILM…YGWS), 372-392 (WIVP…ILMP), and 409-429 (ALAA…LAGP).

This sequence belongs to the major facilitator superfamily.

The protein resides in the cell membrane. In terms of biological role, efflux pump that might be required for efficient secretion of pyrrolocin or other secondary metabolies produced by the pyrrolocin gene cluster. This Fungal sp. (strain NRRL 50135) protein is MFS transporter prlG.